Here is a 275-residue protein sequence, read N- to C-terminus: MSSGDRKHASGGAVTVSRMRAMKREGRPLACLTAYDYGFAAACERAGVDLLLIGDSLGMVVQGHETTLPVTVDDMVYHTRCVARACRRALVVADLPFMSHTGVEQGLHNAGRLMKEGGAQMVKLEGGAEQAALVERLAQNGIPVCGHLGLKPQQVHKIGGYRVQGREQADAERMEADALALEAAGADLLILECVPAVLAQQLSERLTVPVVGIGAGGGCDGQILVLHDVLGVTEQPPRFARAFGAEGGGVHAALEAYVAAVRAGTFPGPEHGFEA.

Aspartate 55 and aspartate 94 together coordinate Mg(2+). Residues 55 to 56 (DS), aspartate 94, and lysine 123 contribute to the 3-methyl-2-oxobutanoate site. Glutamate 125 provides a ligand contact to Mg(2+). The active-site Proton acceptor is the glutamate 192.

The protein belongs to the PanB family. Homodecamer; pentamer of dimers. The cofactor is Mg(2+).

The protein resides in the cytoplasm. It catalyses the reaction 3-methyl-2-oxobutanoate + (6R)-5,10-methylene-5,6,7,8-tetrahydrofolate + H2O = 2-dehydropantoate + (6S)-5,6,7,8-tetrahydrofolate. The protein operates within cofactor biosynthesis; (R)-pantothenate biosynthesis; (R)-pantoate from 3-methyl-2-oxobutanoate: step 1/2. In terms of biological role, catalyzes the reversible reaction in which hydroxymethyl group from 5,10-methylenetetrahydrofolate is transferred onto alpha-ketoisovalerate to form ketopantoate. The protein is 3-methyl-2-oxobutanoate hydroxymethyltransferase of Halorhodospira halophila (strain DSM 244 / SL1) (Ectothiorhodospira halophila (strain DSM 244 / SL1)).